The sequence spans 360 residues: Phospho-N-acetylmuramoyl-pentapeptide-transferase (360 aa).

10 helical membrane-spanning segments follow: residues 27-47, 71-91, 97-117, 132-152, 168-188, 199-219, 236-256, 263-283, 288-308, and 338-358; these read IVGL…LIAW, TPTM…LLWA, YVWC…IDDY, WKYF…YAIG, VMPQ…VGTS, GLAI…AWAT, AGEL…FLWF, VFMG…IAVL, FLLV…ILQV, and VIVR…ATLK.

It belongs to the glycosyltransferase 4 family. MraY subfamily. Mg(2+) is required as a cofactor.

Its subcellular location is the cell inner membrane. The catalysed reaction is UDP-N-acetyl-alpha-D-muramoyl-L-alanyl-gamma-D-glutamyl-meso-2,6-diaminopimeloyl-D-alanyl-D-alanine + di-trans,octa-cis-undecaprenyl phosphate = di-trans,octa-cis-undecaprenyl diphospho-N-acetyl-alpha-D-muramoyl-L-alanyl-D-glutamyl-meso-2,6-diaminopimeloyl-D-alanyl-D-alanine + UMP. It functions in the pathway cell wall biogenesis; peptidoglycan biosynthesis. In terms of biological role, catalyzes the initial step of the lipid cycle reactions in the biosynthesis of the cell wall peptidoglycan: transfers peptidoglycan precursor phospho-MurNAc-pentapeptide from UDP-MurNAc-pentapeptide onto the lipid carrier undecaprenyl phosphate, yielding undecaprenyl-pyrophosphoryl-MurNAc-pentapeptide, known as lipid I. This chain is Phospho-N-acetylmuramoyl-pentapeptide-transferase, found in Proteus mirabilis (strain HI4320).